The chain runs to 136 residues: Blasticidin-S acetyltransferase (136 aa).

Residues 1 to 136 (MLSLPRLQTV…ITSHLLVKEL (136 aa)) enclose the N-acetyltransferase domain.

Functionally, confers resistance to blasticidin S antibiotic. This Streptomyces morookaense (Streptoverticillium morookaense) protein is Blasticidin-S acetyltransferase (bls).